The following is a 209-amino-acid chain: APC/C-CDH1 modulator 1 (209 aa).

Residues 1 to 38 form a disordered region; sequence MISPSKKRTILSSKNINQKPRAVVKGNELRSPSKRRSQ. Serine 48 is modified (phosphoserine). The residue at position 161 (threonine 161) is a Phosphothreonine. Serine 202 is subject to Phosphoserine.

Interacts with CDH1, BMH1 and BMH2.

Functionally, negative regulator of GDH1, the activator protein that regulates the ubiquitin ligase activity and substrate specificity of the anaphase promoting complex/cyclosome (APC/C), and which is required for exit from mitosis, cytokinesis and formation of prereplicative complexes in G1. In Saccharomyces cerevisiae (strain ATCC 204508 / S288c) (Baker's yeast), this protein is APC/C-CDH1 modulator 1 (ACM1).